The sequence spans 470 residues: Nuclear receptor subfamily 0 group B member 1 (470 aa).

3 repeat units span residues 1-67, 68-133, and 134-200. Residues 1-253 are 4 X 67 AA tandem repeats; sequence MAGEDHQWQG…RPVALKNPQV (253 aa). 3 consecutive short sequence motifs (LXXLL motif) follow at residues 13 to 17, 80 to 84, and 146 to 150; these read LYNML, LYSML, and LYSLL. One copy of the 4; truncated repeat lies at 201 to 253; the sequence is FCGEDQPQQGSTLYSMPTSTNQTPAAPEERPGAPWWDTSCGALRPVALKNPQV. Positions 205 to 469 constitute an NR LBD domain; that stretch reads DQPQQGSTLY…DMMLEMLCTK (265 aa). The AF-2 motif motif lies at 461–466; sequence MMLEML.

This sequence belongs to the nuclear hormone receptor family. NR0 subfamily. In terms of assembly, homodimer. Interacts with NR5A1, NR5A2, NR0B2 and with COPS2. Interacts with ESRRB; represses ESRRB activity at the GATA6 promoter.

The protein resides in the nucleus. The protein localises to the cytoplasm. Functionally, nuclear receptor that lacks a DNA-binding domain and acts as a corepressor that inhibits the transcriptional activity of other nuclear receptors through heterodimeric interactions. Component of a cascade required for the development of the hypothalamic-pituitary-adrenal-gonadal axis. May also have a role in the development of the embryo and in the maintenance of embryonic stem cell pluripotency. The sequence is that of Nuclear receptor subfamily 0 group B member 1 (NR0B1) from Callithrix jacchus (White-tufted-ear marmoset).